Consider the following 293-residue polypeptide: 4-hydroxy-tetrahydrodipicolinate synthase (293 aa).

Thr47 provides a ligand contact to pyruvate. Catalysis depends on Tyr135, which acts as the Proton donor/acceptor. Residue Lys163 is the Schiff-base intermediate with substrate of the active site. Residue Val205 coordinates pyruvate.

The protein belongs to the DapA family. Homotetramer; dimer of dimers.

The protein resides in the cytoplasm. It carries out the reaction L-aspartate 4-semialdehyde + pyruvate = (2S,4S)-4-hydroxy-2,3,4,5-tetrahydrodipicolinate + H2O + H(+). The protein operates within amino-acid biosynthesis; L-lysine biosynthesis via DAP pathway; (S)-tetrahydrodipicolinate from L-aspartate: step 3/4. Its function is as follows. Catalyzes the condensation of (S)-aspartate-beta-semialdehyde [(S)-ASA] and pyruvate to 4-hydroxy-tetrahydrodipicolinate (HTPA). The polypeptide is 4-hydroxy-tetrahydrodipicolinate synthase (Leptothrix cholodnii (strain ATCC 51168 / LMG 8142 / SP-6) (Leptothrix discophora (strain SP-6))).